A 391-amino-acid polypeptide reads, in one-letter code: UPF0229 protein BAA_0633 (391 aa).

Residues 1-16 (MGEENQPNYTISQENW) show a composition bias toward polar residues. 2 disordered regions span residues 1-31 (MGEE…RHQE) and 80-117 (HVGQ…GDAA). A compositionally biased stretch (basic and acidic residues) spans 21–31 (KGYDDQQRHQE). Residues 98-115 (GSGGQKQKGPGKGQGAGD) show a composition bias toward gly residues.

This sequence belongs to the UPF0229 family.

In Bacillus anthracis (strain A0248), this protein is UPF0229 protein BAA_0633.